The primary structure comprises 139 residues: MARKIKLVLGVIGSDCHAVGNKILDYSLTEAGFEVTNIGVLSPQEDFINAALETNADAILVSSLYGQGELDCKGLREKCDEAGLKGIKLFVGGNIVVGKQNFDEVHKRFTAMGFDHVYPPGTPVETTIKDLHADFPDHA.

The B12-binding domain maps to 4–139 (KIKLVLGVIG…DLHADFPDHA (136 aa)). Adenosylcob(III)alamin is bound by residues 14–18 (SDCHA), H17, 62–64 (SSL), and 94–98 (NIVVG).

The protein belongs to the methylaspartate mutase GlmS subunit family. Heterotetramer composed of 2 epsilon subunits (GlmE) and 2 sigma subunits (GlmS). GlmE exists as a homodimer and GlmS as a monomer. It depends on adenosylcob(III)alamin as a cofactor.

The catalysed reaction is (2S,3S)-3-methyl-L-aspartate = L-glutamate. It participates in amino-acid degradation; L-glutamate degradation via mesaconate pathway; acetate and pyruvate from L-glutamate: step 1/4. In terms of biological role, catalyzes the carbon skeleton rearrangement of L-glutamate to L-threo-3-methylaspartate ((2S,3S)-3-methylaspartate). This chain is Glutamate mutase sigma subunit, found in Treponema denticola (strain ATCC 35405 / DSM 14222 / CIP 103919 / JCM 8153 / KCTC 15104).